The chain runs to 488 residues: Glutamyl-tRNA(Gln) amidotransferase subunit B, mitochondrial (488 aa).

The protein belongs to the GatB/GatE family. GatB subfamily. In terms of assembly, subunit of the heterotrimeric GatFAB amidotransferase (AdT) complex, composed of A, B and F subunits.

The protein localises to the mitochondrion. It carries out the reaction L-glutamyl-tRNA(Gln) + L-glutamine + ATP + H2O = L-glutaminyl-tRNA(Gln) + L-glutamate + ADP + phosphate + H(+). Functionally, allows the formation of correctly charged Gln-tRNA(Gln) through the transamidation of misacylated Glu-tRNA(Gln) in the mitochondria. The reaction takes place in the presence of glutamine and ATP through an activated gamma-phospho-Glu-tRNA(Gln). In Candida albicans (strain SC5314 / ATCC MYA-2876) (Yeast), this protein is Glutamyl-tRNA(Gln) amidotransferase subunit B, mitochondrial.